The following is a 1096-amino-acid chain: Protein transport protein SEC24 B (1096 aa).

The interval 1 to 315 (MAAPVPPGAY…SAPGTPGSIY (315 aa)) is disordered. Over residues 12–23 (PNNNQQNSGGPP) the composition is skewed to low complexity. The segment covering 27–45 (PGSQGNPNSLAANMQNLNI) has biased composition (polar residues). Pro residues predominate over residues 47–64 (RPPPPMPGSGPRPSPPFG). A compositionally biased stretch (low complexity) spans 65–78 (QSPQSFPQQQQQQP). Positions 79-92 (RPSPMARPGPPPPA) are enriched in pro residues. The span at 93-107 (AMARPGGPPQVSQPG) shows a compositional bias: low complexity. Residues 108 to 122 (GFPPVGRPVAPPSNQ) show a composition bias toward pro residues. Low complexity predominate over residues 140–149 (SFPQPGGFPA). 4 stretches are compositionally biased toward pro residues: residues 150 to 160 (SGPPGGVPSGP), 171 to 186 (SPPP…PPSG), 246 to 258 (MAPP…PPNA), and 287 to 303 (GRPP…PPQQ). Zn(2+) contacts are provided by Cys-433, Cys-436, Cys-455, and Cys-458. A zinc finger-like region spans residues 433–458 (CSRCKGYVNPFMKFIDQGRKFICNLC).

It belongs to the SEC23/SEC24 family. SEC24 subfamily. As to quaternary structure, component of the coat protein complex II (COPII), composed of at least five proteins: the Sec23/24 complex, the Sec13/31 complex and Sar1. As to expression, mainly expressed in pollen, roots, stems, petioles and hypocotyls, and, to a lower extent, in leaves and cotyledons.

Its subcellular location is the cytoplasmic vesicle. The protein localises to the COPII-coated vesicle membrane. It is found in the endoplasmic reticulum membrane. It localises to the golgi apparatus membrane. In terms of biological role, component of the coat protein complex II (COPII), that covers ER-derived vesicles involved in transport from the endoplasmic reticulum to the Golgi apparatus. COPII is composed of at least five proteins: the SEC23/24 complex, the SEC13/31 complex, and the protein SAR1. Acts in the cytoplasm to promote the transport of secretory, plasma membrane, and vacuolar proteins from the endoplasmic reticulum to the Golgi complex. This chain is Protein transport protein SEC24 B, found in Arabidopsis thaliana (Mouse-ear cress).